A 430-amino-acid chain; its full sequence is PCI domain-containing protein 2 homolog (430 aa).

The PCI domain maps to 243-424 (ITYRFFNGRL…ALVVSPTNPF (182 aa)).

The protein belongs to the CSN12 family.

This is PCI domain-containing protein 2 homolog (pcid2) from Dictyostelium discoideum (Social amoeba).